Consider the following 955-residue polypeptide: MEVTCLLLLALIPFHCRGQGVYAPAQAQIVHAGQACVVKEDNISERVYTIREGDTLMLQCLVTGHPRPQVRWTKTAGSASDKFQETSVFNETLRIERIARTQGGRYYCKAENGVGVPAIKSIRVDVQYLDEPMLTVHQTVSDVRGNFYQEKTVFLRCTVNSNPPARFIWKRGSDTLSHSQDNGVDIYEPLYTQGETKVLKLKNLRPQDYASYTCQVSVRNVCGIPDKAITFRLTNTTAPPALKLSVNETLVVNPGENVTVQCLLTGGDPLPQLQWSHGPGPLPLGALAQGGTLSIPSVQARDSGYYNCTATNNVGNPAKKTVNLLVRSMKNATFQITPDVIKESENIQLGQDLKLSCHVDAVPQEKVTYQWFKNGKPARMSKRLLVTRNDPELPAVTSSLELIDLHFSDYGTYLCMASFPGAPVPDLSVEVNISSETVPPTISVPKGRAVVTVREGSPAELQCEVRGKPRPPVLWSRVDKEAALLPSGLPLEETPDGKLRLERVSRDMSGTYRCQTARYNGFNVRPREAQVQLNVQFPPEVEPSSQDVRQALGRPVLLRCSLLRGSPQRIASAVWRFKGQLLPPPPVVPAAAEAPDHAELRLDAVTRDSSGSYECSVSNDVGSAACLFQVSAKAYSPEFYFDTPNPTRSHKLSKNYSYVLQWTQREPDAVDPVLNYRLSIRQLNQHNAVVKAIPVRRVEKGQLLEYILTDLRVPHSYEVRLTPYTTFGAGDMASRIIHYTEPINSPNLSDNTCHFEDEKICGYTQDLTDNFDWTRQNALTQNPKRSPNTGPPTDISGTPEGYYMFIETSRPRELGDRARLVSPLYNASAKFYCVSFFYHMYGKHIGSLNLLVRSRNKGALDTHAWSLSGNKGNVWQQAHVPISPSGPFQIIFEGVRGPGYLGDIAIDDVTLKKGECPRKQTDPNKVVVMPGSGAPCQSSPQLWGPMAIFLLALQR.

A signal peptide spans 1–18; sequence MEVTCLLLLALIPFHCRG. Ig-like domains follow at residues 24–123 and 132–230; these read PAQA…KSIR and PMLT…KAIT. Asn42 and Asn90 each carry an N-linked (GlcNAc...) asparagine glycan. 2 disulfides stabilise this stretch: Cys60-Cys108 and Cys157-Cys214. 5 N-linked (GlcNAc...) asparagine glycosylation sites follow: Asn235, Asn247, Asn257, Asn307, and Asn331. Positions 240–323 constitute an Ig-like 3 domain; the sequence is PALKLSVNET…VGNPAKKTVN (84 aa). Cys262 and Cys308 are disulfide-bonded. Ig-like domains are found at residues 338-432, 440-532, and 539-631; these read PDVI…VEVN, PTIS…AQVQ, and PEVE…FQVS. Cysteines 357 and 415 form a disulfide. Asn432 carries an N-linked (GlcNAc...) asparagine glycan. 2 cysteine pairs are disulfide-bonded: Cys463/Cys514 and Cys560/Cys615. In terms of domain architecture, Fibronectin type-III spans 643 to 743; that stretch reads TPNPTRSHKL…SRIIHYTEPI (101 aa). N-linked (GlcNAc...) asparagine glycosylation is found at Asn655 and Asn747. Residues 751–918 enclose the MAM domain; that stretch reads NTCHFEDEKI…VTLKKGECPR (168 aa). The segment covering 779–788 has biased composition (polar residues); sequence LTQNPKRSPN. The tract at residues 779 to 798 is disordered; sequence LTQNPKRSPNTGPPTDISGT. An N-linked (GlcNAc...) asparagine glycan is attached at Asn826. The GPI-anchor amidated serine moiety is linked to residue Ser932. The propeptide at 933–955 is removed in mature form; it reads GAPCQSSPQLWGPMAIFLLALQR.

As to quaternary structure, interacts heterophilically through its MAM domain with proteins in axon-rich regions and through its Ig-like domains with proteins in differentiating muscle. Interacts (through the Ig-like domains) with NLGN2. As to expression, has been found in brain, heart, skeletal muscle and kidney. Found to be overexpressed in tumor tissues.

It is found in the cell membrane. Required for radial migration of cortical neurons in the superficial layer of the neocortex. Plays a role in the formation or maintenance of inhibitory synapses. May function by inhibiting the activity of NLGN2. The chain is MAM domain-containing glycosylphosphatidylinositol anchor protein 1 (MDGA1) from Homo sapiens (Human).